The primary structure comprises 68 residues: Conotoxin phi-MiXXVIIB (68 aa).

The first 29 residues, 1 to 29 (MRFFFLLLTVALFLTSITGDDAERMLGMK), serve as a signal peptide directing secretion. The propeptide occupies 30–35 (EGGYVR). Disulfide bonds link Cys38–Cys49, Cys42–Cys51, Cys45–Cys56, and Cys50–Cys61. Pro44 bears the 4-hydroxyproline mark.

It belongs to the conotoxin G2 superfamily. 1 family. In terms of tissue distribution, expressed by the venom duct.

It is found in the secreted. This peptide promotes cell proliferation (EC(50)=17.85 uM) and inhibits apoptosis (EC(50)=2.2 uM). In Conus miles (Soldier cone), this protein is Conotoxin phi-MiXXVIIB.